A 361-amino-acid polypeptide reads, in one-letter code: Histidinol-phosphate aminotransferase (361 aa).

Lys224 is modified (N6-(pyridoxal phosphate)lysine).

This sequence belongs to the class-II pyridoxal-phosphate-dependent aminotransferase family. Histidinol-phosphate aminotransferase subfamily. As to quaternary structure, homodimer. Pyridoxal 5'-phosphate is required as a cofactor.

The enzyme catalyses L-histidinol phosphate + 2-oxoglutarate = 3-(imidazol-4-yl)-2-oxopropyl phosphate + L-glutamate. It functions in the pathway amino-acid biosynthesis; L-histidine biosynthesis; L-histidine from 5-phospho-alpha-D-ribose 1-diphosphate: step 7/9. The sequence is that of Histidinol-phosphate aminotransferase from Limosilactobacillus fermentum (strain NBRC 3956 / LMG 18251) (Lactobacillus fermentum).